Reading from the N-terminus, the 314-residue chain is Ribose-phosphate pyrophosphokinase (314 aa).

ATP-binding positions include 37 to 39 (DGE) and 96 to 97 (RQ). Residues histidine 131 and aspartate 170 each coordinate Mg(2+). Lysine 194 is an active-site residue. Residues arginine 196, aspartate 220, and 224–228 (DTGGT) each bind D-ribose 5-phosphate.

This sequence belongs to the ribose-phosphate pyrophosphokinase family. Class I subfamily. Homohexamer. The cofactor is Mg(2+).

It localises to the cytoplasm. It catalyses the reaction D-ribose 5-phosphate + ATP = 5-phospho-alpha-D-ribose 1-diphosphate + AMP + H(+). It functions in the pathway metabolic intermediate biosynthesis; 5-phospho-alpha-D-ribose 1-diphosphate biosynthesis; 5-phospho-alpha-D-ribose 1-diphosphate from D-ribose 5-phosphate (route I): step 1/1. Involved in the biosynthesis of the central metabolite phospho-alpha-D-ribosyl-1-pyrophosphate (PRPP) via the transfer of pyrophosphoryl group from ATP to 1-hydroxyl of ribose-5-phosphate (Rib-5-P). This Vibrio parahaemolyticus serotype O3:K6 (strain RIMD 2210633) protein is Ribose-phosphate pyrophosphokinase.